A 263-amino-acid chain; its full sequence is 4-hydroxy-tetrahydrodipicolinate reductase (263 aa).

NAD(+) is bound by residues 7–12 (GFKGRM), 96–98 (GTT), and 122–125 (APNF). Catalysis depends on His-152, which acts as the Proton donor/acceptor. Residue His-153 participates in (S)-2,3,4,5-tetrahydrodipicolinate binding. Lys-156 (proton donor) is an active-site residue. Position 162–163 (162–163 (GT)) interacts with (S)-2,3,4,5-tetrahydrodipicolinate.

The protein belongs to the DapB family.

The protein resides in the cytoplasm. It carries out the reaction (S)-2,3,4,5-tetrahydrodipicolinate + NAD(+) + H2O = (2S,4S)-4-hydroxy-2,3,4,5-tetrahydrodipicolinate + NADH + H(+). It catalyses the reaction (S)-2,3,4,5-tetrahydrodipicolinate + NADP(+) + H2O = (2S,4S)-4-hydroxy-2,3,4,5-tetrahydrodipicolinate + NADPH + H(+). It functions in the pathway amino-acid biosynthesis; L-lysine biosynthesis via DAP pathway; (S)-tetrahydrodipicolinate from L-aspartate: step 4/4. In terms of biological role, catalyzes the conversion of 4-hydroxy-tetrahydrodipicolinate (HTPA) to tetrahydrodipicolinate. This Listeria monocytogenes serotype 4b (strain F2365) protein is 4-hydroxy-tetrahydrodipicolinate reductase.